A 145-amino-acid polypeptide reads, in one-letter code: Histone H2B (145 aa).

Residues 1–52 are disordered; sequence MAPKAAAGKKPAEKKPVEEKKAEEVPAEKKPKAGKKLPKDAGRPDKKKKRAK. N6-acetyllysine occurs at positions 9, 35, and 36. The segment covering 10 to 44 has biased composition (basic and acidic residues); that stretch reads KPAEKKPVEEKKAEEVPAEKKPKAGKKLPKDAGRP. Residue lysine 141 forms a Glycyl lysine isopeptide (Lys-Gly) (interchain with G-Cter in ubiquitin) linkage.

Belongs to the histone H2B family. In terms of assembly, the nucleosome is a histone octamer containing two molecules each of H2A, H2B, H3 and H4 assembled in one H3-H4 heterotetramer and two H2A-H2B heterodimers. The octamer wraps approximately 147 bp of DNA. Post-translationally, can be acetylated to form H2BK6ac, H2BK33ac and H2BK34ac. Monoubiquitinated to form H2BK143ub1; may give a specific tag for epigenetic transcriptional activation. In anthers, floral buds, pollen, petals and fruits.

It localises to the nucleus. The protein resides in the chromosome. Core component of nucleosome. Nucleosomes wrap and compact DNA into chromatin, limiting DNA accessibility to the cellular machineries which require DNA as a template. Histones thereby play a central role in transcription regulation, DNA repair, DNA replication and chromosomal stability. DNA accessibility is regulated via a complex set of post-translational modifications of histones, also called histone code, and nucleosome remodeling. This is Histone H2B (HIS2B) from Capsicum annuum (Capsicum pepper).